The chain runs to 398 residues: Cytochrome b (398 aa).

The next 4 membrane-spanning stretches (helical) occupy residues 33-53 (FGSL…FLAM), 77-98 (WLIR…YLHI), 113-133 (WNIG…GYVL), and 178-198 (FFAF…IHLL). The heme b site is built by His83 and His97. Residues His182 and His196 each coordinate heme b. His201 is a binding site for a ubiquinone. 4 consecutive transmembrane segments (helical) span residues 226–246 (YKDL…SLFA), 288–308 (LGGV…PILH), 320–340 (FTQL…WIGG), and 347–367 (YVVI…FLIP).

The protein belongs to the cytochrome b family. The cytochrome bc1 complex contains 3 respiratory subunits (MT-CYB, CYC1 and UQCRFS1), 2 core proteins (UQCRC1 and UQCRC2) and probably 6 low-molecular weight proteins. It depends on heme b as a cofactor.

It localises to the mitochondrion inner membrane. Its function is as follows. Component of the ubiquinol-cytochrome c reductase complex (complex III or cytochrome b-c1 complex) that is part of the mitochondrial respiratory chain. The b-c1 complex mediates electron transfer from ubiquinol to cytochrome c. Contributes to the generation of a proton gradient across the mitochondrial membrane that is then used for ATP synthesis. The sequence is that of Cytochrome b (mt-cyb) from Channa asiatica (Small snakehead).